The primary structure comprises 389 residues: Chalcone synthase 9 (389 aa).

The active site involves C164.

This sequence belongs to the thiolase-like superfamily. Chalcone/stilbene synthases family.

The enzyme catalyses (E)-4-coumaroyl-CoA + 3 malonyl-CoA + 3 H(+) = 2',4,4',6'-tetrahydroxychalcone + 3 CO2 + 4 CoA. It functions in the pathway secondary metabolite biosynthesis; flavonoid biosynthesis. Functionally, the primary product of this enzyme is 4,2',4',6'-tetrahydroxychalcone (also termed naringenin-chalcone or chalcone) which can under specific conditions spontaneously isomerize into naringenin. The sequence is that of Chalcone synthase 9 (CHS9) from Daucus carota (Wild carrot).